The sequence spans 316 residues: Glutathione synthetase (316 aa).

The 188-residue stretch at Asn124 to Glu311 folds into the ATP-grasp domain. Position 151–208 (Phe151–Gly208) interacts with ATP. Residues Glu282 and Asn284 each contribute to the Mg(2+) site.

This sequence belongs to the prokaryotic GSH synthase family. Mg(2+) serves as cofactor. Mn(2+) is required as a cofactor.

The enzyme catalyses gamma-L-glutamyl-L-cysteine + glycine + ATP = glutathione + ADP + phosphate + H(+). The protein operates within sulfur metabolism; glutathione biosynthesis; glutathione from L-cysteine and L-glutamate: step 2/2. The polypeptide is Glutathione synthetase (Xanthomonas campestris pv. campestris (strain ATCC 33913 / DSM 3586 / NCPPB 528 / LMG 568 / P 25)).